We begin with the raw amino-acid sequence, 370 residues long: Peptide chain release factor 2 (370 aa).

Residue Q252 is modified to N5-methylglutamine.

The protein belongs to the prokaryotic/mitochondrial release factor family. Post-translationally, methylated by PrmC. Methylation increases the termination efficiency of RF2.

Its subcellular location is the cytoplasm. Functionally, peptide chain release factor 2 directs the termination of translation in response to the peptide chain termination codons UGA and UAA. The polypeptide is Peptide chain release factor 2 (Mycobacterium avium (strain 104)).